Here is a 188-residue protein sequence, read N- to C-terminus: Inosine triphosphate pyrophosphatase (188 aa).

9–14 (TGNAKK) provides a ligand contact to ITP. E39 lines the Mg(2+) pocket. ITP contacts are provided by residues K51, 67-68 (DT), K84, 143-146 (FGWD), K166, and 171-172 (HR).

The protein belongs to the HAM1 NTPase family. In terms of assembly, homodimer. The cofactor is Mg(2+). Mn(2+) serves as cofactor.

The protein resides in the cytoplasm. It catalyses the reaction ITP + H2O = IMP + diphosphate + H(+). The catalysed reaction is dITP + H2O = dIMP + diphosphate + H(+). The enzyme catalyses XTP + H2O = XMP + diphosphate + H(+). Pyrophosphatase that hydrolyzes non-canonical purine nucleotides such as inosine triphosphate (ITP), deoxyinosine triphosphate (dITP) or xanthosine 5'-triphosphate (XTP) to their respective monophosphate derivatives. The enzyme does not distinguish between the deoxy- and ribose forms. Probably excludes non-canonical purines from RNA and DNA precursor pools, thus preventing their incorporation into RNA and DNA and avoiding chromosomal lesions. The protein is Inosine triphosphate pyrophosphatase of Anopheles gambiae (African malaria mosquito).